Consider the following 196-residue polypeptide: Pentatricopeptide repeat-containing protein At1g62350 (196 aa).

PPR repeat units lie at residues 70-104 (DMFFYRDMLMMLARNKKVDETKKVWEDLKKEEVLF) and 105-139 (DQHTFGDLVRGFLDNELPLEAMRLYGEMRESPDRP).

It belongs to the PPR family. P subfamily.

The polypeptide is Pentatricopeptide repeat-containing protein At1g62350 (Arabidopsis thaliana (Mouse-ear cress)).